Consider the following 81-residue polypeptide: Photosystem I iron-sulfur center (81 aa).

4Fe-4S ferredoxin-type domains lie at 2 to 31 (AHSV…MVPW) and 39 to 68 (IASA…VRVY). Residues Cys11, Cys14, Cys17, Cys21, Cys48, Cys51, Cys54, and Cys58 each contribute to the [4Fe-4S] cluster site.

The eukaryotic PSI reaction center is composed of at least 11 subunits. It depends on [4Fe-4S] cluster as a cofactor.

The protein resides in the plastid. It is found in the chloroplast thylakoid membrane. The enzyme catalyses reduced [plastocyanin] + hnu + oxidized [2Fe-2S]-[ferredoxin] = oxidized [plastocyanin] + reduced [2Fe-2S]-[ferredoxin]. Its function is as follows. Apoprotein for the two 4Fe-4S centers FA and FB of photosystem I (PSI); essential for photochemical activity. FB is the terminal electron acceptor of PSI, donating electrons to ferredoxin. The C-terminus interacts with PsaA/B/D and helps assemble the protein into the PSI complex. Required for binding of PsaD and PsaE to PSI. PSI is a plastocyanin-ferredoxin oxidoreductase, converting photonic excitation into a charge separation, which transfers an electron from the donor P700 chlorophyll pair to the spectroscopically characterized acceptors A0, A1, FX, FA and FB in turn. The protein is Photosystem I iron-sulfur center of Mesostigma viride (Green alga).